Reading from the N-terminus, the 445-residue chain is tRNA-2-methylthio-N(6)-dimethylallyladenosine synthase (445 aa).

The region spanning 2-122 is the MTTase N-terminal domain; that stretch reads KKAFVKSYGC…LPDLLARSRE (121 aa). The [4Fe-4S] cluster site is built by Cys-11, Cys-47, Cys-85, Cys-157, Cys-161, and Cys-164. The region spanning 143–378 is the Radical SAM core domain; it reads RTLGASAFLT…LDSQRHAYQR (236 aa). One can recognise a TRAM domain in the interval 378–440; sequence RAAAGRVFDV…SNSLFGELVS (63 aa).

The protein belongs to the methylthiotransferase family. MiaB subfamily. As to quaternary structure, monomer. [4Fe-4S] cluster is required as a cofactor.

Its subcellular location is the cytoplasm. The enzyme catalyses N(6)-dimethylallyladenosine(37) in tRNA + (sulfur carrier)-SH + AH2 + 2 S-adenosyl-L-methionine = 2-methylsulfanyl-N(6)-dimethylallyladenosine(37) in tRNA + (sulfur carrier)-H + 5'-deoxyadenosine + L-methionine + A + S-adenosyl-L-homocysteine + 2 H(+). Catalyzes the methylthiolation of N6-(dimethylallyl)adenosine (i(6)A), leading to the formation of 2-methylthio-N6-(dimethylallyl)adenosine (ms(2)i(6)A) at position 37 in tRNAs that read codons beginning with uridine. The sequence is that of tRNA-2-methylthio-N(6)-dimethylallyladenosine synthase from Methylobacterium radiotolerans (strain ATCC 27329 / DSM 1819 / JCM 2831 / NBRC 15690 / NCIMB 10815 / 0-1).